A 239-amino-acid chain; its full sequence is Putative ABC transporter ATP-binding protein AlbC (239 aa).

Residues 4-238 (LDIHDVSVWY…RREFFEVIGH (235 aa)) enclose the ABC transporter domain. 37-44 (GVNGAGKT) lines the ATP pocket.

The protein belongs to the ABC transporter superfamily.

In terms of biological role, involved in the production of the bacteriocin subtilosin. Required for immunity to subtilosin. This chain is Putative ABC transporter ATP-binding protein AlbC (albC), found in Bacillus subtilis (strain 168).